The following is a 418-amino-acid chain: Alpha-(1-&gt;3)-arabinofuranosyltransferase (418 aa).

11 helical membrane passes run 25 to 45, 81 to 101, 102 to 122, 125 to 145, 153 to 173, 183 to 203, 210 to 230, 266 to 286, 293 to 312, 327 to 349, and 372 to 392; these read NAVA…VLAI, YLYN…THFT, LARW…FGLL, LSGW…AMLT, IFSN…WCVV, VIGL…LPLV, LILG…LVPG, MEIT…LALL, PYFW…FFLS, IFTL…AYFF, and ATVG…IWFI.

This sequence belongs to the glycosyltransferase 87 family.

It localises to the cell membrane. It catalyses the reaction Adds an alpha-D-arabinofuranosyl group from trans,octacis-decaprenylphospho-beta-D-arabinofuranose at the 3-O-position of an alpha-(1-&gt;5)-arabinofuranan chain attached to a beta-(1-&gt;5)-galactofuranan chain.. Its pathway is cell wall biogenesis; cell wall polysaccharide biosynthesis. Functionally, involved in the biosynthesis of the arabinogalactan (AG) region of the mycolylarabinogalactan-peptidoglycan (mAGP) complex, an essential component of the corynebacterial cell wall. Catalyzes the addition of an arabinofuranosyl (Araf) residue from the sugar donor beta-D-arabinofuranosyl-1-monophosphoryldecaprenol (DPA) on the C-3 of an alpha-(1-&gt;5)-linked Araf from the arabinan backbone of AG. The protein is Alpha-(1-&gt;3)-arabinofuranosyltransferase of Corynebacterium glutamicum (strain ATCC 13032 / DSM 20300 / JCM 1318 / BCRC 11384 / CCUG 27702 / LMG 3730 / NBRC 12168 / NCIMB 10025 / NRRL B-2784 / 534).